The following is a 488-amino-acid chain: Sucrose 6(F)-phosphate phosphorylase (488 aa).

Residues Asp49, His87, 195–197, Glu238, 295–296, 342–345, and Arg399 each bind sucrose 6(F)-phosphate; these read RLD, HD, and DVHQ. Asp197 (nucleophile) is an active-site residue. Residue Glu238 is the Proton donor/acceptor of the active site.

This sequence belongs to the glycosyl hydrolase 13 family. Sucrose phosphorylase subfamily. In terms of assembly, monomer.

It carries out the reaction sucrose 6(F)-phosphate + phosphate = beta-D-fructose 6-phosphate + alpha-D-glucose 1-phosphate. Catalyzes the reversible phosphorolysis of sucrose 6(F)-phosphate into alpha-D-glucose 1-phosphate (Glc1P) and D-fructose 6-phosphate. May be involved in a new pathway for the degradation of sucrose, which could become phosphorylated on its fructose moiety during uptake via a PTS system. To a lesser extent, can also reversibly act on sucrose in vitro. Is also able to catalyze transglycosylation reactions in vitro. The protein is Sucrose 6(F)-phosphate phosphorylase of Thermoanaerobacterium thermosaccharolyticum (strain ATCC 7956 / DSM 571 / NCIMB 9385 / NCA 3814 / NCTC 13789 / WDCM 00135 / 2032) (Clostridium thermosaccharolyticum).